Here is a 250-residue protein sequence, read N- to C-terminus: 5-oxoprolinase subunit A 2 (250 aa).

The protein belongs to the LamB/PxpA family. Forms a complex composed of PxpA, PxpB and PxpC.

It catalyses the reaction 5-oxo-L-proline + ATP + 2 H2O = L-glutamate + ADP + phosphate + H(+). Catalyzes the cleavage of 5-oxoproline to form L-glutamate coupled to the hydrolysis of ATP to ADP and inorganic phosphate. The chain is 5-oxoprolinase subunit A 2 from Bordetella bronchiseptica (strain ATCC BAA-588 / NCTC 13252 / RB50) (Alcaligenes bronchisepticus).